The chain runs to 329 residues: Glycerol-3-phosphate dehydrogenase [NAD(P)+] (329 aa).

NADPH contacts are provided by Trp11, Arg30, and Lys103. 3 residues coordinate sn-glycerol 3-phosphate: Lys103, Gly132, and Ser134. Ala136 is an NADPH binding site. Sn-glycerol 3-phosphate-binding residues include Lys187, Asp240, Ser250, Arg251, and Asn252. Lys187 functions as the Proton acceptor in the catalytic mechanism. Arg251 lines the NADPH pocket. Residues Val275 and Glu277 each coordinate NADPH.

This sequence belongs to the NAD-dependent glycerol-3-phosphate dehydrogenase family.

The protein resides in the cytoplasm. The enzyme catalyses sn-glycerol 3-phosphate + NAD(+) = dihydroxyacetone phosphate + NADH + H(+). It catalyses the reaction sn-glycerol 3-phosphate + NADP(+) = dihydroxyacetone phosphate + NADPH + H(+). It participates in membrane lipid metabolism; glycerophospholipid metabolism. Catalyzes the reduction of the glycolytic intermediate dihydroxyacetone phosphate (DHAP) to sn-glycerol 3-phosphate (G3P), the key precursor for phospholipid synthesis. The chain is Glycerol-3-phosphate dehydrogenase [NAD(P)+] from Nitrosomonas europaea (strain ATCC 19718 / CIP 103999 / KCTC 2705 / NBRC 14298).